Reading from the N-terminus, the 277-residue chain is B3 domain-containing protein At3g19184 (277 aa).

The segment at 33–94 (QSLRVSSSSS…LERRPRRSSR (62 aa)) is disordered. The segment at residues 130–221 (FTKPMLQSHV…TFKVYIIRVN (92 aa)) is a DNA-binding region (TF-B3). Over residues 224–250 (ANNDSDGNEVNDDDSDGNEEDRDNDNE) the composition is skewed to acidic residues. Residues 224–277 (ANNDSDGNEVNDDDSDGNEEDRDNDNESNEKQKETVSEGRQLRSSGKRKRRGRK) are disordered. The segment covering 251–264 (SNEKQKETVSEGRQ) has biased composition (basic and acidic residues). Basic residues predominate over residues 268–277 (SGKRKRRGRK).

It is found in the nucleus. In Arabidopsis thaliana (Mouse-ear cress), this protein is B3 domain-containing protein At3g19184.